A 344-amino-acid chain; its full sequence is Lipase chaperone (344 aa).

A helical membrane pass occupies residues 14-34 (AAIYGGVGLAAVAGVAMWSGA).

This sequence belongs to the lipase chaperone family.

It localises to the cell inner membrane. Functionally, may be involved in the folding of the extracellular lipase during its passage through the periplasm. The sequence is that of Lipase chaperone from Burkholderia cenocepacia (strain ATCC BAA-245 / DSM 16553 / LMG 16656 / NCTC 13227 / J2315 / CF5610) (Burkholderia cepacia (strain J2315)).